The chain runs to 181 residues: MNFQEAWEKQPMSKPRIEKVTVNMGVGESGDKLLTAEKVVSEITGQKPVRTLAKQTNPAFNIRKKLPIGLKITLRGKKAEEFLKDAFTAFTASGKQLFTYSFDKRGNFSFGIPEHIDFPNQKYDPSVGIYGMDICVTFEKPGYSVKRRKAKRANIPAKHLVSKEEAINYIETIYGIKVEQE.

It belongs to the universal ribosomal protein uL5 family. Part of the 50S ribosomal subunit; contacts the 5S rRNA and probably tRNA. Forms a bridge to the 30S subunit in the 70S ribosome.

Functionally, this is one of the proteins that bind and probably mediate the attachment of the 5S RNA into the large ribosomal subunit, where it forms part of the central protuberance. In the 70S ribosome it contacts protein S13 of the 30S subunit (bridge B1b), connecting the 2 subunits; this bridge is implicated in subunit movement. May contact the P site tRNA; the 5S rRNA and some of its associated proteins might help stabilize positioning of ribosome-bound tRNAs. This Methanococcus aeolicus (strain ATCC BAA-1280 / DSM 17508 / OCM 812 / Nankai-3) protein is Large ribosomal subunit protein uL5.